Consider the following 878-residue polypeptide: Coatomer subunit gamma (878 aa).

HEAT repeat units follow at residues 64–101 (REATDCFFAMTKLFQSKDVVLRRMVYLGIKELSSVAED), 287–324 (RMLSPAFSILQLFCSSPKATLRFAAVRTLNKVAMTHPA), 326–359 (VTTCNLDLEGLITDSNRSVATLAITTLLKTGAES), 360–396 (SVERLMKQISTFVAEISDEFKIVVVQAICALCTKYPR), 399–434 (TVLMNFLSGMLREEGGLEYKTSIVDTIITIIEENAD), and 471–508 (ATPSKYIRFIYNRVILESPIVRAAAVTALSQFGASCPA).

The protein belongs to the COPG family. In terms of assembly, oligomeric complex that consists of at least the alpha, beta, beta', gamma, delta, epsilon and zeta subunits.

It is found in the cytoplasm. Its subcellular location is the golgi apparatus membrane. The protein localises to the cytoplasmic vesicle. It localises to the COPI-coated vesicle membrane. The protein resides in the endoplasmic reticulum. In terms of biological role, the coatomer is a cytosolic protein complex that binds to dilysine motifs and reversibly associates with Golgi non-clathrin-coated vesicles, which further mediate biosynthetic protein transport from the ER, via the Golgi up to the trans Golgi network. Coatomer complex is required for budding from Golgi membranes, and is essential for the retrograde Golgi-to-ER transport of dilysine-tagged proteins. Required for limiting lipid storage in lipid droplets. Involved in the expansion of luminal extracellular matrices and apical membrane during tubulogenesis. Required in the tracheal epithelium for luminal protein secretion and diametric tube growth. In salivary glands, required for deposition of O-glycans and luminal extracellular matrix assembly. Required for epidermal morphogenesis and cuticle development. In Drosophila pseudoobscura pseudoobscura (Fruit fly), this protein is Coatomer subunit gamma.